A 537-amino-acid chain; its full sequence is DNA-directed primase/polymerase protein (537 aa).

Positions 1-22 (MLRKWEARVKQIEERASHYERK) form a coiled coil. Residues Arg-76, 114 to 116 (DLE), 165 to 169 (KFSRH), 270 to 273 (RNFR), and Lys-279 each bind substrate. 2 residues coordinate Mn(2+): Asp-114 and Glu-116. Cys-401, His-408, Cys-428, and Cys-433 together coordinate Zn(2+). The short motif at 401–434 (CENIGRAHKSNNIMILVDLKNEVWYQKCHDPVCK) is the Zinc knuckle motif element. The tract at residues 462-481 (SGETDDTSTSLTKDSQTPPS) is disordered. The tract at residues 462-536 (SGETDDTSTS…DELIIEALQN (75 aa)) is interaction with RPA1. Over residues 468–478 (TSTSLTKDSQT) the composition is skewed to low complexity. 2 consecutive short sequence motifs (RPA1-binding motif) follow at residues 494–507 (WDDE…EATE) and 524–532 (DIPDELIIE).

The protein belongs to the eukaryotic-type primase small subunit family. In terms of assembly, interacts with RPA1; leading to recruitment to chromatin and stimulate DNA primase activity. Interacts with SSBP1. Interacts with POLDIP2; leading to enhance DNA polymerase activity. Mn(2+) serves as cofactor.

It is found in the nucleus. The protein localises to the mitochondrion matrix. Its subcellular location is the chromosome. It catalyses the reaction ssDNA + n NTP = ssDNA/pppN(pN)n-1 hybrid + (n-1) diphosphate.. It carries out the reaction DNA(n) + a 2'-deoxyribonucleoside 5'-triphosphate = DNA(n+1) + diphosphate. DNA primase and DNA polymerase required to tolerate replication-stalling lesions by bypassing them. Required to facilitate mitochondrial and nuclear replication fork progression by initiating de novo DNA synthesis using dNTPs and acting as an error-prone DNA polymerase able to bypass certain DNA lesions. Shows a high capacity to tolerate DNA damage lesions such as 8oxoG and abasic sites in DNA. Provides different translesion synthesis alternatives when DNA replication is stalled: able to synthesize DNA primers downstream of lesions, such as ultraviolet (UV) lesions, R-loops and G-quadruplexes, to allow DNA replication to continue. Can also realign primers ahead of 'unreadable lesions' such as abasic sites and 6-4 photoproduct (6-4 pyrimidine-pyrimidinone), thereby skipping the lesion. Repriming avoids fork degradation while leading to accumulation of internal ssDNA gaps behind the forks. Also able to incorporate nucleotides opposite DNA lesions such as 8oxoG, like a regular translesion synthesis DNA polymerase. Also required for reinitiating stalled forks after UV damage during nuclear DNA replication. Required for mitochondrial DNA (mtDNA) synthesis and replication, by reinitiating synthesis after UV damage or in the presence of chain-terminating nucleotides. Prevents APOBEC family-mediated DNA mutagenesis by repriming downstream of abasic site to prohibit error-prone translesion synthesis. Has non-overlapping function with POLH. In addition to its role in DNA damage response, also required to maintain efficient nuclear and mitochondrial DNA replication in unperturbed cells. This Mus musculus (Mouse) protein is DNA-directed primase/polymerase protein.